A 589-amino-acid chain; its full sequence is 3-hydroxy-3-methylglutaryl coenzyme A reductase 2-B (589 aa).

Residues 1-35 (MDVRRRPVTKTLTAGEPLKSQNQHSSSLKASDALP) lie on the Lumenal side of the membrane. Residues 36-56 (LPLYLTNGLFFTMFFSVMYFL) form a helical membrane-spanning segment. At 57-79 (LHRWREKIRNSVPLHVVTLSELA) the chain is on the cytoplasmic side. The helical transmembrane segment at 80–100 (ALVLLVASVIYLLGFFGIGFV) threads the bilayer. Residues 101–544 (QSLIRPSPDS…SKESPGPNSR (444 aa)) are Lumenal-facing. The N-linked (GlcNAc...) asparagine glycan is linked to Asn256. Glu268 (charge relay system) is an active-site residue. Asn332 is a glycosylation site (N-linked (GlcNAc...) asparagine). Catalysis depends on charge relay system residues Lys400 and Asp476. Residues 545 to 565 (LLASIVAGSVLAGELSLMSAL) traverse the membrane as a helical segment. Residues 566-589 (AAGQLVKSHMKFNRSSKDVSKLSS) are Cytoplasmic-facing. Residue His574 is the Proton donor of the active site.

The protein belongs to the HMG-CoA reductase family.

It localises to the endoplasmic reticulum membrane. It carries out the reaction (R)-mevalonate + 2 NADP(+) + CoA = (3S)-3-hydroxy-3-methylglutaryl-CoA + 2 NADPH + 2 H(+). The protein operates within metabolic intermediate biosynthesis; (R)-mevalonate biosynthesis; (R)-mevalonate from acetyl-CoA: step 3/3. Functionally, catalyzes the synthesis of mevalonate, the specific precursor of all isoprenoid compounds present in plants. Component of the triterpene saponins (e.g. ginsenosides or panaxosides) and phytosterols biosynthetic pathways. Promotes triterpenes accumulation in roots. In Panax ginseng (Korean ginseng), this protein is 3-hydroxy-3-methylglutaryl coenzyme A reductase 2-B.